The chain runs to 341 residues: Binder of USO1 and GRH1 protein 1 (341 aa).

The interval 1–181 (MSEQESDEVK…AADDLFANDG (181 aa)) is disordered. An N-acetylserine modification is found at serine 2. Residues 2-41 (SEQESDEVKRMKQLEEARKRVEELKKKKNKKNKGKKNKNS) are a coiled coil. Positions 7–26 (DEVKRMKQLEEARKRVEELK) are enriched in basic and acidic residues. Basic residues predominate over residues 27–39 (KKKNKKNKGKKNK). Residues 69–78 (KANSTKSENN) show a composition bias toward polar residues. Positions 79–91 (DQNDVDEESEEKE) are enriched in acidic residues. Serine 87 is modified (phosphoserine). The span at 118–132 (GKDDAENTKKEEVQE) shows a compositional bias: basic and acidic residues. A compositionally biased stretch (polar residues) spans 158–171 (VQTQEGNEPSNTSE). Serine 170 carries the post-translational modification Phosphoserine. Residues 188 to 272 (LTTIKKQKEE…LKLAEAKAAR (85 aa)) adopt a coiled-coil conformation. A Phosphothreonine modification is found at threonine 292.

Interacts with GRH1 (via C-terminus), probably forming a heterooligomer consisting of a GRH1 dimer and a BUG1 dimer.

It localises to the cytoplasm. The protein localises to the golgi apparatus. The protein resides in the cis-Golgi network membrane. Functionally, involved in ER to Golgi vesicle-mediated transport by either facilitating USO1-dependent and -independent tethering or increasing target accuracy of fusion events of COPII-coated vesicles. This chain is Binder of USO1 and GRH1 protein 1, found in Saccharomyces cerevisiae (strain ATCC 204508 / S288c) (Baker's yeast).